We begin with the raw amino-acid sequence, 388 residues long: Sulfate adenylyltransferase (388 aa).

It belongs to the sulfate adenylyltransferase family.

It carries out the reaction sulfate + ATP + H(+) = adenosine 5'-phosphosulfate + diphosphate. It participates in sulfur metabolism; hydrogen sulfide biosynthesis; sulfite from sulfate: step 1/3. The protein is Sulfate adenylyltransferase of Trichodesmium erythraeum (strain IMS101).